A 366-amino-acid polypeptide reads, in one-letter code: GTP cyclohydrolase 1 type 2 homolog (366 aa).

Residues histidine 64, histidine 65, aspartate 102, histidine 326, and glutamate 329 each coordinate a divalent metal cation.

It belongs to the GTP cyclohydrolase I type 2/NIF3 family. In terms of assembly, homohexamer.

The sequence is that of GTP cyclohydrolase 1 type 2 homolog from Staphylococcus epidermidis (strain ATCC 35984 / DSM 28319 / BCRC 17069 / CCUG 31568 / BM 3577 / RP62A).